A 254-amino-acid chain; its full sequence is Glc operon transcriptional activator (254 aa).

The region spanning Arg6–Leu74 is the HTH gntR-type domain. Residues Glu34–Thr53 constitute a DNA-binding region (H-T-H motif).

Functionally, transcriptional activator of the glcDEFGB operon which is associated with glycolate utilization, and encodes malate synthase G and the genes needed for glycolate oxidase activity. Also negatively regulates the transcription of its own gene. Glycolate acts as an effector, but GlcC can also use acetate as an alternative effector. This chain is Glc operon transcriptional activator (glcC), found in Escherichia coli O6:H1 (strain CFT073 / ATCC 700928 / UPEC).